The sequence spans 771 residues: Endoplasmin homolog (771 aa).

The signal sequence occupies residues 1–24 (MANSSLLRVVLVALLLLGSVTVSA). N63, D109, and F160 together coordinate ATP. N63 carries an N-linked (GlcNAc...) asparagine glycan. Positions 253 to 282 (TAATPEPAAEEGSLDEGAVEEDPDKEGDTQ) are disordered. Residues 260 to 277 (AAEEGSLDEGAVEEDPDK) show a composition bias toward acidic residues. N306 and N402 each carry an N-linked (GlcNAc...) asparagine glycan. Residues 727–771 (ADDSLLPPDDAEYTVSDTEAEEEEEQPKVDANADEEAEAVGEDDL) are disordered. Over residues 758 to 771 (NADEEAEAVGEDDL) the composition is skewed to acidic residues. The Prevents secretion from ER signature appears at 768–771 (EDDL).

This sequence belongs to the heat shock protein 90 family. In terms of assembly, homotetramer.

The protein localises to the endoplasmic reticulum. Functionally, molecular chaperone that functions in the processing and transport of secreted proteins. Required for the synthesis of lipophosphoglycan (LPG), a cell surface glycoconjugate. Necessary for the attachment of the galactosyl residue to the mannose within the phosphoglycan repeats of the nascent LPG chain. Also required for addition of phosphoglycan to acid phosphatase. Not required for normal growth. Has ATPase activity. Binds heparin with micromolar affinity which may facilitate infection of host cells. This is Endoplasmin homolog from Leishmania infantum.